A 315-amino-acid chain; its full sequence is Ribosomal protein L11 methyltransferase (315 aa).

The S-adenosyl-L-methionine site is built by threonine 163, glycine 184, aspartate 206, and asparagine 248.

Belongs to the methyltransferase superfamily. PrmA family.

It is found in the cytoplasm. It carries out the reaction L-lysyl-[protein] + 3 S-adenosyl-L-methionine = N(6),N(6),N(6)-trimethyl-L-lysyl-[protein] + 3 S-adenosyl-L-homocysteine + 3 H(+). Methylates ribosomal protein L11. This is Ribosomal protein L11 methyltransferase from Lacticaseibacillus paracasei (strain ATCC 334 / BCRC 17002 / CCUG 31169 / CIP 107868 / KCTC 3260 / NRRL B-441) (Lactobacillus paracasei).